The primary structure comprises 850 residues: Receptor-like serine/threonine-protein kinase SD1-8 (850 aa).

Positions 1–26 are cleaved as a signal peptide; that stretch reads MRGLPNFYHSYTFFFFFLLILFPAYS. Over 27 to 441 the chain is Extracellular; sequence ISANTLSASE…LEDKRNRSAK (415 aa). One can recognise a Bulb-type lectin domain in the interval 31–153; it reads TLSASESLTI…KNSAPDGVLW (123 aa). Residues N43, N118, and N242 are each glycosylated (N-linked (GlcNAc...) asparagine). In terms of domain architecture, EGF-like spans 292–328; that stretch reads PKDQCDEYKECGVYGYCDSNTSPVCNCIKGFKPRNPQ. Intrachain disulfides connect C296–C308, C302–C316, C378–C403, and C382–C388. Residues 347-428 form the PAN domain; the sequence is CGGGDGFVRL…GGQDLYVRLA (82 aa). N-linked (GlcNAc...) asparagine glycans are attached at residues N387 and N437. The chain crosses the membrane as a helical span at residues 442 to 462; that stretch reads IIGSSIGVSVLLLLSFIIFFL. At 463-850 the chain is on the cytoplasmic side; the sequence is WKRKQKRSIL…QITVSVLDAR (388 aa). The Protein kinase domain maps to 526–807; it reads FSNANKLGQG…LMLGSESTTI (282 aa). ATP is bound by residues 532–540 and K554; that span reads LGQGGFGIV. Residues 615–632 form a caM-binding region; that stretch reads SRNSKLNWQMRFDIINGI. D651 functions as the Proton acceptor in the catalytic mechanism.

This sequence belongs to the protein kinase superfamily. Ser/Thr protein kinase family. As to quaternary structure, interacts with PUB9, PUB13, PUB14 and PUB38. Expressed in the root-hypocotyl transition zone, at the base of lateral roots, axillary buds and pedicels.

The protein resides in the cell membrane. It carries out the reaction L-seryl-[protein] + ATP = O-phospho-L-seryl-[protein] + ADP + H(+). It catalyses the reaction L-threonyl-[protein] + ATP = O-phospho-L-threonyl-[protein] + ADP + H(+). Its function is as follows. Involved in the regulation of cellular expansion and differentiation. This Arabidopsis thaliana (Mouse-ear cress) protein is Receptor-like serine/threonine-protein kinase SD1-8 (SD18).